The chain runs to 482 residues: MKFIVKPHPEVFVKSDSVRKRFIRILETNLRSIIQRDTKGVEVINRRDYIEVSGLDGTYRNQVLTAVTHTPGIHHTLEVKQTAFADMHDIYEQCLEMNREIIEGKTFCVRVKRRGTHPFTSIELERYVGGGLNQAVESAKVKLKNPDVTVKFEVENEKLNLVIARHKGLGGFPLGTQEDVLSLISGGFDSGVSSYLHIKRGSKVHYMFFNLGGPAHEIGVKQVSHFLWKKYGSSAKVKFIAVDFEPVVAEILEKVDDGQMGVILKRMFMRAGGMVAEKLGIQGMVTGEALGQVSSQTLTNLRHIDNVTDTLILRPLINWDKEDIINVARDIGTEDFAKTMPEYCGVISKKPTIKAEKLKLEKEEAKFDFSILDQVIYDARVMDIRAIEKESQEQAPEVEMVSELGSDVVVLDIRSAEEEDESPLIIEGVEVKHLPFFRIATQFGDLDQSKEYLLYCDHGVMSRLQALLLIENGYKNVKVYRP.

One can recognise a THUMP domain in the interval 61–165 (NQVLTAVTHT…NEKLNLVIAR (105 aa)). ATP-binding positions include 183 to 184 (LI), Lys-265, Gly-287, and Gln-296. Cys-344 and Cys-456 form a disulfide bridge. The region spanning 404–482 (LGSDVVVLDI…GYKNVKVYRP (79 aa)) is the Rhodanese domain. Cys-456 functions as the Cysteine persulfide intermediate in the catalytic mechanism.

The protein belongs to the ThiI family.

It is found in the cytoplasm. The catalysed reaction is [ThiI sulfur-carrier protein]-S-sulfanyl-L-cysteine + a uridine in tRNA + 2 reduced [2Fe-2S]-[ferredoxin] + ATP + H(+) = [ThiI sulfur-carrier protein]-L-cysteine + a 4-thiouridine in tRNA + 2 oxidized [2Fe-2S]-[ferredoxin] + AMP + diphosphate. The enzyme catalyses [ThiS sulfur-carrier protein]-C-terminal Gly-Gly-AMP + S-sulfanyl-L-cysteinyl-[cysteine desulfurase] + AH2 = [ThiS sulfur-carrier protein]-C-terminal-Gly-aminoethanethioate + L-cysteinyl-[cysteine desulfurase] + A + AMP + 2 H(+). The protein operates within cofactor biosynthesis; thiamine diphosphate biosynthesis. In terms of biological role, catalyzes the ATP-dependent transfer of a sulfur to tRNA to produce 4-thiouridine in position 8 of tRNAs, which functions as a near-UV photosensor. Also catalyzes the transfer of sulfur to the sulfur carrier protein ThiS, forming ThiS-thiocarboxylate. This is a step in the synthesis of thiazole, in the thiamine biosynthesis pathway. The sulfur is donated as persulfide by IscS. The polypeptide is tRNA sulfurtransferase (Aliivibrio salmonicida (strain LFI1238) (Vibrio salmonicida (strain LFI1238))).